Reading from the N-terminus, the 316-residue chain is METWQELKVTVKREGEELVSNLLIELGAQGVAIEDSLDYVGNVDRFGEIFPEVEQQEEIVVTAYYPDTVDVTVVEADLQARISELTDFMDLGELKIGTTALAEEDWADNWKKYYEPARITHDLTIVPSWTDYEATAGEKIIKLDPGMAFGTGTHPTTKMSLFALEQVLRGGETVLDVGTGSGVLSIASSLLGAKEIFAYDLDDVAVRVAQENIELNPGMENIHVAAGDLLKGVEIEADVIVANILADILIHLIDDAYRLVKDEGYLIMSGIIKDKWDMVRESAESAGFFLETHMVQGEWNTCVFKKTKDISGVIGG.

Residues T157, G178, D200, and N243 each contribute to the S-adenosyl-L-methionine site.

Belongs to the methyltransferase superfamily. PrmA family.

The protein localises to the cytoplasm. It catalyses the reaction L-lysyl-[protein] + 3 S-adenosyl-L-methionine = N(6),N(6),N(6)-trimethyl-L-lysyl-[protein] + 3 S-adenosyl-L-homocysteine + 3 H(+). Functionally, methylates ribosomal protein L11. This is Ribosomal protein L11 methyltransferase from Streptococcus pneumoniae (strain JJA).